The chain runs to 286 residues: Acetylglutamate kinase (286 aa).

Residues 69–70, Arg91, and Asn185 contribute to the substrate site; that span reads GG.

The protein belongs to the acetylglutamate kinase family. ArgB subfamily.

The protein localises to the cytoplasm. The enzyme catalyses N-acetyl-L-glutamate + ATP = N-acetyl-L-glutamyl 5-phosphate + ADP. It functions in the pathway amino-acid biosynthesis; L-arginine biosynthesis; N(2)-acetyl-L-ornithine from L-glutamate: step 2/4. Functionally, catalyzes the ATP-dependent phosphorylation of N-acetyl-L-glutamate. The protein is Acetylglutamate kinase of Chlorobium chlorochromatii (strain CaD3).